Reading from the N-terminus, the 306-residue chain is Phosphatidate cytidylyltransferase (306 aa).

A disordered region spans residues 1 to 28 (MTTNDAGTGNPAEQPARGAKQQPATETS). 8 helical membrane-spanning segments follow: residues 36-56 (AAIVVGLSIGLVLIAVLVFVP), 82-102 (GYLIPVIPLLIGGQAAVWLTW), 103-123 (PFGAVGALAGFGGMVVVCMIW), 151-171 (ATVFLAVWVPLFCSFGAMLVY), 180-200 (FCMMIAVIASDVGGYAVGVLF), 218-238 (FAGSLVCGITATIITATFLVG), 241-261 (PWIGALLGVLFVLTTALGDLV), and 285-305 (MDRLDGILPSAVAAWIVLTLL).

Belongs to the CDS family.

It localises to the cell membrane. It catalyses the reaction a 1,2-diacyl-sn-glycero-3-phosphate + CTP + H(+) = a CDP-1,2-diacyl-sn-glycerol + diphosphate. It functions in the pathway phospholipid metabolism; CDP-diacylglycerol biosynthesis; CDP-diacylglycerol from sn-glycerol 3-phosphate: step 3/3. This Mycobacterium bovis (strain ATCC BAA-935 / AF2122/97) protein is Phosphatidate cytidylyltransferase (cdsA).